A 150-amino-acid polypeptide reads, in one-letter code: Putative pre-16S rRNA nuclease (150 aa).

It belongs to the YqgF nuclease family.

The protein resides in the cytoplasm. Its function is as follows. Could be a nuclease involved in processing of the 5'-end of pre-16S rRNA. The chain is Putative pre-16S rRNA nuclease from Chlamydia abortus (strain DSM 27085 / S26/3) (Chlamydophila abortus).